The primary structure comprises 291 residues: Oxidative stress-responsive serine-rich protein 1 (291 aa).

The tract at residues 48–174 (EDAKPKSACA…SSDAPQVSQA (127 aa)) is disordered. A compositionally biased stretch (basic residues) spans 65–83 (STRKSSRGAVRTQRRRRSK). A compositionally biased stretch (polar residues) spans 132–142 (ECSSSLDTNHT). 2 positions are modified to phosphothreonine: threonine 142 and threonine 232.

The protein is Oxidative stress-responsive serine-rich protein 1 (OSER1) of Bos taurus (Bovine).